The following is a 201-amino-acid chain: Single-stranded DNA-binding protein DdrA (201 aa).

Belongs to the RAD52 family. In terms of assembly, the truncated form (1-160) of DdrA forms heptameric rings that can assemble into a 3-ring structure.

In terms of biological role, ssDNA-binding protein that contributes to the ionizing radiation resistance of D.deserti. Plays a role in DNA repair and genome reconstitution, in a RecA-independent process, since DdrA is essential for recovery from severe genomic fragmentation as a result of exposure to severe levels of ionizing radiation in an environment lacking nutrients. In vitro, binds to the 3'-ends of single-stranded DNA, and probably protects them from nuclease degradation. Thus, DdrA is part of a DNA end-protection system that helps to preserve genome integrity following irradiation or desiccation. In Deinococcus deserti (strain DSM 17065 / CIP 109153 / LMG 22923 / VCD115), this protein is Single-stranded DNA-binding protein DdrA (ddrA).